Consider the following 248-residue polypeptide: Pyridoxine 5'-phosphate synthase (248 aa).

Asparagine 9 is a 3-amino-2-oxopropyl phosphate binding site. 1-deoxy-D-xylulose 5-phosphate is bound at residue 11–12; it reads DH. Residue arginine 20 participates in 3-amino-2-oxopropyl phosphate binding. The active-site Proton acceptor is the histidine 45. Positions 47 and 52 each coordinate 1-deoxy-D-xylulose 5-phosphate. The active-site Proton acceptor is the glutamate 72. Threonine 102 contributes to the 1-deoxy-D-xylulose 5-phosphate binding site. The active-site Proton donor is the histidine 193. Residues glycine 194 and 215-216 each bind 3-amino-2-oxopropyl phosphate; that span reads GH.

The protein belongs to the PNP synthase family. Homooctamer; tetramer of dimers.

It localises to the cytoplasm. The catalysed reaction is 3-amino-2-oxopropyl phosphate + 1-deoxy-D-xylulose 5-phosphate = pyridoxine 5'-phosphate + phosphate + 2 H2O + H(+). The protein operates within cofactor biosynthesis; pyridoxine 5'-phosphate biosynthesis; pyridoxine 5'-phosphate from D-erythrose 4-phosphate: step 5/5. Catalyzes the complicated ring closure reaction between the two acyclic compounds 1-deoxy-D-xylulose-5-phosphate (DXP) and 3-amino-2-oxopropyl phosphate (1-amino-acetone-3-phosphate or AAP) to form pyridoxine 5'-phosphate (PNP) and inorganic phosphate. The sequence is that of Pyridoxine 5'-phosphate synthase from Hydrogenovibrio crunogenus (strain DSM 25203 / XCL-2) (Thiomicrospira crunogena).